Consider the following 396-residue polypeptide: Microcin B17-processing protein McbD (396 aa).

In terms of domain architecture, YcaO spans 41–396 (ASAAGETLKS…VRESKMVPFP (356 aa)).

The protein resides in the cytoplasm. Necessary to process the inactive microcin B17 (McbA) precursor into the active peptide. The sequence is that of Microcin B17-processing protein McbD (mcbD) from Escherichia coli.